Reading from the N-terminus, the 200-residue chain is UPF0637 protein LCABL_14170 (200 aa).

The protein belongs to the UPF0637 family.

This Lacticaseibacillus casei (strain BL23) (Lactobacillus casei) protein is UPF0637 protein LCABL_14170.